We begin with the raw amino-acid sequence, 255 residues long: Thiazole synthase (255 aa).

Lysine 96 (schiff-base intermediate with DXP) is an active-site residue. 1-deoxy-D-xylulose 5-phosphate is bound by residues glycine 157, 183–184 (AG), and 205–206 (NS).

The protein belongs to the ThiG family. As to quaternary structure, homotetramer. Forms heterodimers with either ThiH or ThiS.

The protein resides in the cytoplasm. The enzyme catalyses [ThiS sulfur-carrier protein]-C-terminal-Gly-aminoethanethioate + 2-iminoacetate + 1-deoxy-D-xylulose 5-phosphate = [ThiS sulfur-carrier protein]-C-terminal Gly-Gly + 2-[(2R,5Z)-2-carboxy-4-methylthiazol-5(2H)-ylidene]ethyl phosphate + 2 H2O + H(+). It participates in cofactor biosynthesis; thiamine diphosphate biosynthesis. Functionally, catalyzes the rearrangement of 1-deoxy-D-xylulose 5-phosphate (DXP) to produce the thiazole phosphate moiety of thiamine. Sulfur is provided by the thiocarboxylate moiety of the carrier protein ThiS. In vitro, sulfur can be provided by H(2)S. The chain is Thiazole synthase from Staphylococcus carnosus (strain TM300).